We begin with the raw amino-acid sequence, 280 residues long: Formamidopyrimidine-DNA glycosylase (280 aa).

The Schiff-base intermediate with DNA role is filled by P2. E3 serves as the catalytic Proton donor. Catalysis depends on K53, which acts as the Proton donor; for beta-elimination activity. DNA-binding residues include H91, R110, and R152. The segment at 239–273 adopts an FPG-type zinc-finger fold; it reads HVYGRAGQPCDRCGTPIEKIVLGQRGTHFCPVCQP. R263 functions as the Proton donor; for delta-elimination activity in the catalytic mechanism.

The protein belongs to the FPG family. In terms of assembly, monomer. Zn(2+) serves as cofactor.

The enzyme catalyses Hydrolysis of DNA containing ring-opened 7-methylguanine residues, releasing 2,6-diamino-4-hydroxy-5-(N-methyl)formamidopyrimidine.. It carries out the reaction 2'-deoxyribonucleotide-(2'-deoxyribose 5'-phosphate)-2'-deoxyribonucleotide-DNA = a 3'-end 2'-deoxyribonucleotide-(2,3-dehydro-2,3-deoxyribose 5'-phosphate)-DNA + a 5'-end 5'-phospho-2'-deoxyribonucleoside-DNA + H(+). Involved in base excision repair of DNA damaged by oxidation or by mutagenic agents. Acts as a DNA glycosylase that recognizes and removes damaged bases. Has a preference for oxidized purines, such as 7,8-dihydro-8-oxoguanine (8-oxoG). Has AP (apurinic/apyrimidinic) lyase activity and introduces nicks in the DNA strand. Cleaves the DNA backbone by beta-delta elimination to generate a single-strand break at the site of the removed base with both 3'- and 5'-phosphates. This is Formamidopyrimidine-DNA glycosylase (mutM) from Deinococcus radiodurans (strain ATCC 13939 / DSM 20539 / JCM 16871 / CCUG 27074 / LMG 4051 / NBRC 15346 / NCIMB 9279 / VKM B-1422 / R1).